The sequence spans 205 residues: Adenylyl-sulfate kinase (205 aa).

An ATP-binding site is contributed by 31–38; it reads GLSGAGKS. S105 acts as the Phosphoserine intermediate in catalysis.

Belongs to the APS kinase family.

The enzyme catalyses adenosine 5'-phosphosulfate + ATP = 3'-phosphoadenylyl sulfate + ADP + H(+). It functions in the pathway sulfur metabolism; hydrogen sulfide biosynthesis; sulfite from sulfate: step 2/3. Catalyzes the synthesis of activated sulfate. The sequence is that of Adenylyl-sulfate kinase from Shewanella baltica (strain OS155 / ATCC BAA-1091).